Consider the following 116-residue polypeptide: Flagellar transcriptional regulator FlhD (116 aa).

This sequence belongs to the FlhD family. As to quaternary structure, homodimer; disulfide-linked. Forms a heterohexamer composed of two FlhC and four FlhD subunits. Each FlhC binds a FlhD dimer, forming a heterotrimer, and a hexamer assembles by dimerization of two heterotrimers.

It localises to the cytoplasm. Functions in complex with FlhC as a master transcriptional regulator that regulates transcription of several flagellar and non-flagellar operons by binding to their promoter region. Activates expression of class 2 flagellar genes, including fliA, which is a flagellum-specific sigma factor that turns on the class 3 genes. Also regulates genes whose products function in a variety of physiological pathways. This is Flagellar transcriptional regulator FlhD from Escherichia coli O157:H7.